Here is a 231-residue protein sequence, read N- to C-terminus: NADH-ubiquinone oxidoreductase chain 4 (231 aa).

Transmembrane regions (helical) follow at residues 1–21 (PIAGSMVLAAILLKLGGYGII), 34–54 (LFLPFIVLALWGAILANLTCL), 63–85 (IAYSSISHMGLVVAAIIIQTPWG), 89–111 (AMALMIAHGFTSSALFCLANMTY), 124–146 (GLHNTLPMATTWWLMTNLMNIAI), and 169–189 (TIIILGLSMLITASYSLHMFL).

Belongs to the complex I subunit 4 family.

Its subcellular location is the mitochondrion membrane. It carries out the reaction a ubiquinone + NADH + 5 H(+)(in) = a ubiquinol + NAD(+) + 4 H(+)(out). In terms of biological role, core subunit of the mitochondrial membrane respiratory chain NADH dehydrogenase (Complex I) that is believed to belong to the minimal assembly required for catalysis. Complex I functions in the transfer of electrons from NADH to the respiratory chain. The immediate electron acceptor for the enzyme is believed to be ubiquinone. The chain is NADH-ubiquinone oxidoreductase chain 4 (MT-ND4) from Crotalus lepidus (Banded rock rattlesnake).